A 968-amino-acid chain; its full sequence is RNA polymerase-associated protein RapA (968 aa).

A Helicase ATP-binding domain is found at 164-334 (DVGRRHAPRV…FARLRLLDPN (171 aa)). 177-184 (DEVGLGKT) lines the ATP pocket. A DEAH box motif is present at residues 280–283 (DEAH). The 155-residue stretch at 490–644 (RVEWLMGYLT…TCPTGRTVYD (155 aa)) folds into the Helicase C-terminal domain.

This sequence belongs to the SNF2/RAD54 helicase family. RapA subfamily. In terms of assembly, interacts with the RNAP. Has a higher affinity for the core RNAP than for the holoenzyme. Its ATPase activity is stimulated by binding to RNAP.

In terms of biological role, transcription regulator that activates transcription by stimulating RNA polymerase (RNAP) recycling in case of stress conditions such as supercoiled DNA or high salt concentrations. Probably acts by releasing the RNAP, when it is trapped or immobilized on tightly supercoiled DNA. Does not activate transcription on linear DNA. Probably not involved in DNA repair. The chain is RNA polymerase-associated protein RapA from Klebsiella pneumoniae (strain 342).